A 322-amino-acid polypeptide reads, in one-letter code: Acetyl-coenzyme A carboxylase carboxyl transferase subunit alpha (322 aa).

The region spanning 39-293 (RLQKKSQALT…RRALTDTLAE (255 aa)) is the CoA carboxyltransferase C-terminal domain.

The protein belongs to the AccA family. Acetyl-CoA carboxylase is a heterohexamer composed of biotin carboxyl carrier protein (AccB), biotin carboxylase (AccC) and two subunits each of ACCase subunit alpha (AccA) and ACCase subunit beta (AccD).

The protein localises to the cytoplasm. It catalyses the reaction N(6)-carboxybiotinyl-L-lysyl-[protein] + acetyl-CoA = N(6)-biotinyl-L-lysyl-[protein] + malonyl-CoA. Its pathway is lipid metabolism; malonyl-CoA biosynthesis; malonyl-CoA from acetyl-CoA: step 1/1. Functionally, component of the acetyl coenzyme A carboxylase (ACC) complex. First, biotin carboxylase catalyzes the carboxylation of biotin on its carrier protein (BCCP) and then the CO(2) group is transferred by the carboxyltransferase to acetyl-CoA to form malonyl-CoA. The chain is Acetyl-coenzyme A carboxylase carboxyl transferase subunit alpha from Thiobacillus denitrificans (strain ATCC 25259 / T1).